We begin with the raw amino-acid sequence, 802 residues long: MTASPESMGQKFRNMTANECFQSRSTVLQGQPFGGIPTVLLLNIILWVCVVLVYSFLRKAAWDYGRLALLIHNDSLTSLIYGEQSEKSSPSEVYLEAERRDKGFSTWFFNSLTMRDRDLINKCGEDARIYIMFQYHLIIFVLILCIPSLGIILPVNYIGSALDWSSHFGRTTIVNVSTESQFLWLHSIFAFMYFLTNFAFMGHHCLGFVPKKNLHFTRTLMITYVPTEIQDPETISKHFHEAYPGCVVTRVHFCYDVRNLIDLDDQRRHAMRGRLYYTAKAKKTGKVMIKVHPCSHLCFCKCWTCFKEVDAEQYYSELEEQLTDEFNAELNRVQLKRLDLIFVTFQDARTVKRIHNDYKYINCGRHPMQSSVTTIVKNNHWRVARAPHPKDIIWKHLSIRRFSWWARFIAINTSLFFLFFFLTTPAIIINTIDMYNVTRPIEKLQSPVVTQFFPSVLLWAFTVIMPLLVYFSAFLEAHWTRSNQNLIIMYKCYIFLVFMVVILPSMGLTSLDVFLRWLFDIYYLEHATIRFQCVFLPDNGAFFINYVITSALFGTGMELMRLGSLCTYCTRLFLSRSEPERVHIRKNLAMDFQFGREYAWMLNVFSVVMAYSITCPIIVPFGLLYLCMKHITDRYNMYYSYAPTKLNAQIHMAAVYQAIFAPLLGLFWMLFFSILRVGSLHSITLFSLSSIIISVIIAFSGVFLGKFRIAQQYEQPEEETETVFDVEPSSTTSTPTSLLYVATVLQEPELNLTPASSPARHTYGTMNSQPEEGEEESGLRGFARELDPAQFQEGLELEGQSH.

Residues 1 to 35 (MTASPESMGQKFRNMTANECFQSRSTVLQGQPFGG) are Extracellular-facing. A helical membrane pass occupies residues 36–60 (IPTVLLLNIILWVCVVLVYSFLRKA). Residues 61–124 (AWDYGRLALL…RDRDLINKCG (64 aa)) lie on the Cytoplasmic side of the membrane. Phosphoserine occurs at positions 75 and 78. The chain crosses the membrane as a helical span at residues 125–157 (EDARIYIMFQYHLIIFVLILCIPSLGIILPVNY). At 158–180 (IGSALDWSSHFGRTTIVNVSTES) the chain is on the extracellular side. The helical transmembrane segment at 181-205 (QFLWLHSIFAFMYFLTNFAFMGHHC) threads the bilayer. The Cytoplasmic portion of the chain corresponds to 206–401 (LGFVPKKNLH…IIWKHLSIRR (196 aa)). A helical transmembrane segment spans residues 402–431 (FSWWARFIAINTSLFFLFFFLTTPAIIINT). The Extracellular portion of the chain corresponds to 432-446 (IDMYNVTRPIEKLQS). The chain crosses the membrane as a helical span at residues 447 to 476 (PVVTQFFPSVLLWAFTVIMPLLVYFSAFLE). The Cytoplasmic portion of the chain corresponds to 477–480 (AHWT). Residues 481 to 517 (RSNQNLIIMYKCYIFLVFMVVILPSMGLTSLDVFLRW) form a helical membrane-spanning segment. Residues 518 to 540 (LFDIYYLEHATIRFQCVFLPDNG) are Extracellular-facing. The helical transmembrane segment at 541-573 (AFFINYVITSALFGTGMELMRLGSLCTYCTRLF) threads the bilayer. Residues 574–593 (LSRSEPERVHIRKNLAMDFQ) lie on the Cytoplasmic side of the membrane. A helical membrane pass occupies residues 594-612 (FGREYAWMLNVFSVVMAYS). Over 613-615 (ITC) the chain is Extracellular. The helical transmembrane segment at 616–640 (PIIVPFGLLYLCMKHITDRYNMYYS) threads the bilayer. Over 641-647 (YAPTKLN) the chain is Cytoplasmic. Residues 648–676 (AQIHMAAVYQAIFAPLLGLFWMLFFSILR) form a helical membrane-spanning segment. The Extracellular portion of the chain corresponds to 677–681 (VGSLH). Residues 682-702 (SITLFSLSSIIISVIIAFSGV) form a helical membrane-spanning segment. At 703–802 (FLGKFRIAQQ…EGLELEGQSH (100 aa)) the chain is on the cytoplasmic side. The segment at 753–785 (TPASSPARHTYGTMNSQPEEGEEESGLRGFARE) is disordered.

Belongs to the CSC1 (TC 1.A.17) family. As to quaternary structure, monomer. In terms of tissue distribution, expressed in podocytes of kidney glomeruli.

The protein localises to the endoplasmic reticulum membrane. It is found in the cell membrane. It catalyses the reaction Ca(2+)(in) = Ca(2+)(out). Acts as an osmosensitive cation channel preferentially activated upon hypotonic stress. In contrast to TMEM63B, does not show phospholipid scramblase activity. Enriched in mitochondria-ER contact sites where it may regulate the metabolite flux and organelles' morphologies in response to osmotic changes. In particular may regulate mitochondrial motility and function in motor neuron axons. Required for the functional integrity of the kidney glomerular filtration barrier. This chain is Osmosensitive cation channel TMEM63C (Tmem63c), found in Rattus norvegicus (Rat).